We begin with the raw amino-acid sequence, 859 residues long: Leucine--tRNA ligase (859 aa).

The short motif at Pro43–His53 is the 'HIGH' region element. The short motif at Lys614–Ser618 is the 'KMSKS' region element. Residue Lys617 participates in ATP binding.

Belongs to the class-I aminoacyl-tRNA synthetase family.

It localises to the cytoplasm. The catalysed reaction is tRNA(Leu) + L-leucine + ATP = L-leucyl-tRNA(Leu) + AMP + diphosphate. The chain is Leucine--tRNA ligase from Magnetococcus marinus (strain ATCC BAA-1437 / JCM 17883 / MC-1).